We begin with the raw amino-acid sequence, 330 residues long: uncharacterized protein (330 aa).

Helical transmembrane passes span 15 to 35, 41 to 61, 72 to 92, 102 to 122, 125 to 145, 175 to 195, 201 to 221, 238 to 258, 264 to 284, and 286 to 306; these read LTLI…KGVL, FFVA…WAMG, GWGW…GFLA, LGSV…SWLF, VIGG…SLIG, LWML…PFVS, VVAT…IALV, LAYA…YLAS, SLSS…NLIL, and EQLS…IYLI. 2 EamA domains span residues 22 to 146 and 182 to 308; these read FLWG…LIGL and LSMA…LINQ.

This sequence belongs to the EamA transporter family.

It localises to the cell membrane. This is an uncharacterized protein from Synechocystis sp. (strain ATCC 27184 / PCC 6803 / Kazusa).